The chain runs to 426 residues: Serine--tRNA ligase (426 aa).

229-231 (TAE) serves as a coordination point for L-serine. ATP is bound by residues 260–262 (RKE) and Val-276. Glu-283 serves as a coordination point for L-serine. 349 to 352 (EVTS) provides a ligand contact to ATP. Position 384 (Thr-384) interacts with L-serine.

Belongs to the class-II aminoacyl-tRNA synthetase family. Type-1 seryl-tRNA synthetase subfamily. As to quaternary structure, homodimer. The tRNA molecule binds across the dimer.

The protein localises to the cytoplasm. The enzyme catalyses tRNA(Ser) + L-serine + ATP = L-seryl-tRNA(Ser) + AMP + diphosphate + H(+). It catalyses the reaction tRNA(Sec) + L-serine + ATP = L-seryl-tRNA(Sec) + AMP + diphosphate + H(+). It participates in aminoacyl-tRNA biosynthesis; selenocysteinyl-tRNA(Sec) biosynthesis; L-seryl-tRNA(Sec) from L-serine and tRNA(Sec): step 1/1. Functionally, catalyzes the attachment of serine to tRNA(Ser). Is also able to aminoacylate tRNA(Sec) with serine, to form the misacylated tRNA L-seryl-tRNA(Sec), which will be further converted into selenocysteinyl-tRNA(Sec). The chain is Serine--tRNA ligase from Treponema pallidum (strain Nichols).